A 143-amino-acid polypeptide reads, in one-letter code: Large ribosomal subunit protein uL13 (143 aa).

It belongs to the universal ribosomal protein uL13 family. In terms of assembly, part of the 50S ribosomal subunit.

This protein is one of the early assembly proteins of the 50S ribosomal subunit, although it is not seen to bind rRNA by itself. It is important during the early stages of 50S assembly. The polypeptide is Large ribosomal subunit protein uL13 (Dehalococcoides mccartyi (strain ATCC BAA-2266 / KCTC 15142 / 195) (Dehalococcoides ethenogenes (strain 195))).